We begin with the raw amino-acid sequence, 297 residues long: Acetaldehyde dehydrogenase (297 aa).

15–18 (SGSI) contributes to the NAD(+) binding site. Residue Cys-130 is the Acyl-thioester intermediate of the active site. Residues 162-170 (SAGIATREN) and Asn-272 contribute to the NAD(+) site.

The protein belongs to the acetaldehyde dehydrogenase family.

The catalysed reaction is acetaldehyde + NAD(+) + CoA = acetyl-CoA + NADH + H(+). This is Acetaldehyde dehydrogenase from Burkholderia pseudomallei (strain 1106a).